A 316-amino-acid polypeptide reads, in one-letter code: Pantothenate kinase (316 aa).

Residue 95-102 (GSVAVGKS) participates in ATP binding.

This sequence belongs to the prokaryotic pantothenate kinase family.

The protein localises to the cytoplasm. The enzyme catalyses (R)-pantothenate + ATP = (R)-4'-phosphopantothenate + ADP + H(+). The protein operates within cofactor biosynthesis; coenzyme A biosynthesis; CoA from (R)-pantothenate: step 1/5. The protein is Pantothenate kinase of Shigella sonnei (strain Ss046).